The primary structure comprises 127 residues: MPTINQLIRYGRKPKKKKSKAPALQGNPQKRGVCIKVSTMTPKKPNSALRKIARVRLSNGIEVTAYIPGIGHNLQEHSVVLVRGGRVKDLPGVRYKIIRGALDAAGVEGRRQSRSKYGAKRPKDQKK.

Positions 11–20 (GRKPKKKKSK) are enriched in basic residues. The interval 11-30 (GRKPKKKKSKAPALQGNPQK) is disordered. A 3-methylthioaspartic acid modification is found at aspartate 89. Positions 105-127 (AGVEGRRQSRSKYGAKRPKDQKK) are disordered. The span at 112–127 (QSRSKYGAKRPKDQKK) shows a compositional bias: basic residues.

Belongs to the universal ribosomal protein uS12 family. As to quaternary structure, part of the 30S ribosomal subunit. Contacts proteins S8 and S17. May interact with IF1 in the 30S initiation complex.

In terms of biological role, with S4 and S5 plays an important role in translational accuracy. Functionally, interacts with and stabilizes bases of the 16S rRNA that are involved in tRNA selection in the A site and with the mRNA backbone. Located at the interface of the 30S and 50S subunits, it traverses the body of the 30S subunit contacting proteins on the other side and probably holding the rRNA structure together. The combined cluster of proteins S8, S12 and S17 appears to hold together the shoulder and platform of the 30S subunit. This is Small ribosomal subunit protein uS12 from Thermotoga maritima (strain ATCC 43589 / DSM 3109 / JCM 10099 / NBRC 100826 / MSB8).